The sequence spans 143 residues: Flagellar assembly factor FliW (143 aa).

Belongs to the FliW family. In terms of assembly, interacts with flagellin in a 1:1 complex. Two molecules interact with each CsrA dimer; cannot interact with both flagellin and CsrA simultaneously. Has a higher affinity for CsrA than for flagellin. Interacts directly with flagellin (hag), forms a 3-way complex of Hag, FliS and FliW in which Flis and FliW do not directly interact. Interaction with Hag may occur via the C-terminus of Hag.

Its subcellular location is the cytoplasm. Acts as an anti-CsrA protein, binds CsrA and prevents it from repressing translation of its target genes, one of which is flagellin. Binds to flagellin (hag), which is implicated in polymerization, and participates in the assembly of the flagellum. An antagonist to translational regulator CsrA, it binds CsrA at an allosteric site and non-competitively inhibits CsrA binding to hag RNA. Partner switching by flagellin between FliW and CsrA provides a flagellar assembly checkpoint to tightly control the timing of flagellin synthesis. Flagellin binds to assembly factor FliW, freeing translation regulator CsrA to repress translation of the flagellin mRNA. When the flagellar hook is assembled flagellin is secreted, depleting intracellular flagellin, which frees FliW to interact with CsrA and inhibits CsrA binding to mRNA. This derepresses flagellin translation and provides protein for flagellar assembly. Once the flagellar filament is completed cytoplasmic flagellin levels rise and CsrA translation repression of flagellin reinitiates. Binds to CsrA and displaces it from hag mRNA. Binds to hag mRNA itself, but only at much higher concentrations than those required to displace CsrA. The polypeptide is Flagellar assembly factor FliW (Bacillus subtilis (strain 168)).